A 42-amino-acid polypeptide reads, in one-letter code: MQDFQKYLSTAPVLATIWFIILAGLLIEINRFFPDALLVPMK.

A helical membrane pass occupies residues 7-27 (YLSTAPVLATIWFIILAGLLI).

The protein belongs to the PsaJ family.

The protein localises to the plastid. Its subcellular location is the chloroplast thylakoid membrane. May help in the organization of the PsaE and PsaF subunits. This Mesostigma viride (Green alga) protein is Photosystem I reaction center subunit IX.